A 156-amino-acid polypeptide reads, in one-letter code: Large ribosomal subunit protein uL30 (156 aa).

It belongs to the universal ribosomal protein uL30 family. Part of the 50S ribosomal subunit.

The protein is Large ribosomal subunit protein uL30 of Sulfolobus acidocaldarius (strain ATCC 33909 / DSM 639 / JCM 8929 / NBRC 15157 / NCIMB 11770).